The sequence spans 595 residues: P2X purinoceptor 7 (595 aa).

Residues Met-1–Gln-22 are Cytoplasmic-facing. Cys-4 carries the S-palmitoyl cysteine lipid modification. The chain crosses the membrane as a helical span at residues Ser-23–Val-46. Residues Ser-47–Phe-328 are Extracellular-facing. Asn-74 is a glycosylation site (N-linked (GlcNAc...) asparagine). Cystine bridges form between Cys-119-Cys-168, Cys-129-Cys-152, and Cys-135-Cys-162. ADP-ribosylarginine; by ART2B occurs at positions 125 and 133. N-linked (GlcNAc...) asparagine glycosylation occurs at Asn-187. Thr-189 provides a ligand contact to ATP. Asn-202 and Asn-213 each carry an N-linked (GlcNAc...) asparagine glycan. An intrachain disulfide couples Cys-216 to Cys-226. Asn-241 carries N-linked (GlcNAc...) asparagine glycosylation. Cys-260 and Cys-269 are oxidised to a cystine. The ATP site is built by Arg-294 and Lys-311. A helical membrane pass occupies residues Asp-329 to Leu-353. Ser-342 serves as a coordination point for Na(+). Residues Leu-354 to Tyr-595 are Cytoplasmic-facing. The segment at Ser-360–Cys-377 is C-cys anchor. Residues Cys-363, Cys-374, and Cys-377 are each lipidated (S-palmitoyl cysteine). Residue Ser-390 is modified to Phosphoserine. Residues Lys-395–Tyr-595 are cytoplasmic ballast. Residues Cys-479, Cys-499, and Cys-506 each coordinate Zn(2+). The GTP site is built by Arg-546, His-547, Tyr-550, and Ala-567. Cys-572 is a Zn(2+) binding site. Lys-583, Ser-589, and Gly-590 together coordinate GTP.

Belongs to the P2X receptor family. In terms of assembly, homotrimers. Interacts with LAMA3, ITGB2, ACTB, ACTN4, SVIL, MPP3, HSPA1, HSPCB, HSPA8, PIK230 and PTPRB. Interacts (via C-terminus) with EMP2. In terms of processing, phosphorylation results in its inactivation. Post-translationally, ADP-ribosylation at Arg-125 is necessary and sufficient to activate P2RX7 and gate the channel. Palmitoylation of several cysteines in the C-terminal cytoplasmic tail is required for efficient localization to cell surface. Palmitoylation prevents channel desensitization by physically anchoring the palmitoylated groups to the membrane.

The protein resides in the cell membrane. The catalysed reaction is Ca(2+)(in) = Ca(2+)(out). The enzyme catalyses K(+)(in) = K(+)(out). It carries out the reaction Na(+)(in) = Na(+)(out). With respect to regulation, activated by high extracellular ATP levels (0.1-2.5 mM). The synthetic analog 2'(3')-O-(4-benzoylbenzoyl)ATP (BzATP) acts as a potent agonist. Does not undergo desensitization, instead, undergoes a facilitation process where currents progressively increase with repetitive or prolonged agonist application. Palmitoylation prevents channel desensitization. The permeability of the P2RX7 channel is modulated by the amount of cholesterol in the plasma membrane. ATP-gated nonselective transmembrane cation channel. Requires high millimolar-range concentrations of ATP to become activated. ATP binding trigers the rapid opening of the channel and allows Na(+) and Ca(2+) influx and K(+) efflux. Has also the ability to form a large pore in the cell membrane, allowing the passage of large cationic molecules. In microglia, may mediate NADPH transport across the plasma membrane. In immune cells, P2RX7 acts as a molecular sensor in pathological inflammatory states by detecting and responding to high local concentrations of extracellar ATP. In microglial cells, P2RX7 activation leads to the release of pro-inflammatory cytokines, such as IL-1beta and IL-18, through the activation of the NLRP3 inflammasome and caspase-1. Cooperates with KCNK6 to activate NLRP3 inflammasome. Activates death pathways leading to apoptosis and autophagy. Activates death pathways leading to pyroptosis. In Mus musculus (Mouse), this protein is P2X purinoceptor 7 (P2rx7).